The primary structure comprises 355 residues: Peptide chain release factor 1 (355 aa).

Position 232 is an N5-methylglutamine (Gln-232).

The protein belongs to the prokaryotic/mitochondrial release factor family. Methylated by PrmC. Methylation increases the termination efficiency of RF1.

It is found in the cytoplasm. Its function is as follows. Peptide chain release factor 1 directs the termination of translation in response to the peptide chain termination codons UAG and UAA. In Kineococcus radiotolerans (strain ATCC BAA-149 / DSM 14245 / SRS30216), this protein is Peptide chain release factor 1.